A 456-amino-acid chain; its full sequence is Elongator complex protein 4 (456 aa).

Basic and acidic residues predominate over residues 1–11 (MSFRKRGEILN). Residues 1–91 (MSFRKRGEIL…SQPTTSTGSA (91 aa)) form a disordered region. R13 bears the Omega-N-methylarginine mark. Residues 18–27 (RGPLLRGPPR) show a composition bias toward low complexity. Over residues 57-66 (NIADESKTKM) the composition is skewed to basic and acidic residues. Positions 77-90 (PSPATSQPTTSTGS) are enriched in low complexity. S222 carries the post-translational modification Phosphoserine. The tract at residues 424–444 (EGSAASEQSHSHSHSDEISHN) is disordered. Residues 432-442 (SHSHSHSDEIS) show a composition bias toward basic and acidic residues.

The protein belongs to the ELP4 family. In terms of assembly, component of the elongator complex which consists of ELP1/IKI3, ELP2, ELP3, ELP4, ELP5/IKI1 and ELP6. The elongator complex is composed of two copies of the Elp123 subcomplex (composed of ELP1/IKI3, ELP2 and ELP3) and two copies of the Elp456 subcomplex (composed of ELP4, ELP5/IKI1 and ELP6). The Elp123 subcomplex forms a two-lobed scaffold, which binds the Elp456 subcomplex asymmetrically. In each lobe, ELP2 is tightly sandwiched between ELP1/IKI3 and ELP3. The Elp123 subcomplex binds tRNA through ELP1/IKI3 and ELP3 and can bind 2 tRNAs simultaneously. tRNA-binding by the Elp123 subcomplex induces conformational rearrangements which precisely position the targeted anticodon base in the active site. The Elp456 subcomplex binds tRNA and has ATPase activity. ELP4 interacts with KTI12.

Its subcellular location is the cytoplasm. It localises to the nucleus. It participates in tRNA modification; 5-methoxycarbonylmethyl-2-thiouridine-tRNA biosynthesis. Its function is as follows. Component of the elongator complex, a multiprotein complex which is required for multiple tRNA modifications, including mcm5U (5-methoxycarbonylmethyl uridine), mcm5s2U (5-methoxycarbonylmethyl-2-thiouridine), and ncm5U (5-carbamoylmethyl uridine). The elongator complex catalyzes formation of carboxymethyluridine in the wobble base at position 34 in tRNAs. It functions as a gamma-toxin target (TOT); disruption of the complex confers resistance to Kluyveromyces lactis toxin zymocin (pGKL1 killer toxin). May also be involved in sensitivity to Pichia inositovora toxin. This chain is Elongator complex protein 4, found in Saccharomyces cerevisiae (strain ATCC 204508 / S288c) (Baker's yeast).